The primary structure comprises 319 residues: Ferrochelatase (319 aa).

The Fe cation site is built by H193 and E274.

It belongs to the ferrochelatase family.

It localises to the cytoplasm. It catalyses the reaction heme b + 2 H(+) = protoporphyrin IX + Fe(2+). The protein operates within porphyrin-containing compound metabolism; protoheme biosynthesis; protoheme from protoporphyrin-IX: step 1/1. Functionally, catalyzes the ferrous insertion into protoporphyrin IX. This Actinobacillus pleuropneumoniae serotype 3 (strain JL03) protein is Ferrochelatase.